The primary structure comprises 254 residues: 3-deoxy-manno-octulosonate cytidylyltransferase (254 aa).

The protein belongs to the KdsB family.

It localises to the cytoplasm. The catalysed reaction is 3-deoxy-alpha-D-manno-oct-2-ulosonate + CTP = CMP-3-deoxy-beta-D-manno-octulosonate + diphosphate. It participates in nucleotide-sugar biosynthesis; CMP-3-deoxy-D-manno-octulosonate biosynthesis; CMP-3-deoxy-D-manno-octulosonate from 3-deoxy-D-manno-octulosonate and CTP: step 1/1. Its pathway is bacterial outer membrane biogenesis; lipopolysaccharide biosynthesis. In terms of biological role, activates KDO (a required 8-carbon sugar) for incorporation into bacterial lipopolysaccharide in Gram-negative bacteria. The chain is 3-deoxy-manno-octulosonate cytidylyltransferase from Bordetella pertussis (strain Tohama I / ATCC BAA-589 / NCTC 13251).